The following is a 177-amino-acid chain: Large ribosomal subunit protein uL6 (177 aa).

The protein belongs to the universal ribosomal protein uL6 family. As to quaternary structure, part of the 50S ribosomal subunit.

In terms of biological role, this protein binds to the 23S rRNA, and is important in its secondary structure. It is located near the subunit interface in the base of the L7/L12 stalk, and near the tRNA binding site of the peptidyltransferase center. This chain is Large ribosomal subunit protein uL6, found in Dinoroseobacter shibae (strain DSM 16493 / NCIMB 14021 / DFL 12).